A 476-amino-acid chain; its full sequence is Aspartyl/glutamyl-tRNA(Asn/Gln) amidotransferase subunit B (476 aa).

This sequence belongs to the GatB/GatE family. GatB subfamily. As to quaternary structure, heterotrimer of A, B and C subunits.

The catalysed reaction is L-glutamyl-tRNA(Gln) + L-glutamine + ATP + H2O = L-glutaminyl-tRNA(Gln) + L-glutamate + ADP + phosphate + H(+). The enzyme catalyses L-aspartyl-tRNA(Asn) + L-glutamine + ATP + H2O = L-asparaginyl-tRNA(Asn) + L-glutamate + ADP + phosphate + 2 H(+). Its function is as follows. Allows the formation of correctly charged Asn-tRNA(Asn) or Gln-tRNA(Gln) through the transamidation of misacylated Asp-tRNA(Asn) or Glu-tRNA(Gln) in organisms which lack either or both of asparaginyl-tRNA or glutaminyl-tRNA synthetases. The reaction takes place in the presence of glutamine and ATP through an activated phospho-Asp-tRNA(Asn) or phospho-Glu-tRNA(Gln). The polypeptide is Aspartyl/glutamyl-tRNA(Asn/Gln) amidotransferase subunit B (Lacticaseibacillus paracasei (strain ATCC 334 / BCRC 17002 / CCUG 31169 / CIP 107868 / KCTC 3260 / NRRL B-441) (Lactobacillus paracasei)).